Here is a 355-residue protein sequence, read N- to C-terminus: Glucose-1-phosphate thymidylyltransferase (355 aa).

Residues D107 and D220 each contribute to the Mg(2+) site.

The protein belongs to the glucose-1-phosphate thymidylyltransferase family. Mg(2+) serves as cofactor.

It carries out the reaction dTTP + alpha-D-glucose 1-phosphate + H(+) = dTDP-alpha-D-glucose + diphosphate. It participates in antibiotic biosynthesis; streptomycin biosynthesis. Functionally, involved in the biosynthesis of the streptose moiety of streptomycin. Catalyzes the formation of dTDP-glucose, from dTTP and glucose 1-phosphate, as well as its pyrophosphorolysis. This is Glucose-1-phosphate thymidylyltransferase (strD) from Streptomyces griseus.